Reading from the N-terminus, the 84-residue chain is ICP35 (84 aa).

In Crustacea (WSSV), this protein is ICP35.